The primary structure comprises 626 residues: Chaperone protein HtpG (626 aa).

Residues 1 to 339 (MSQNQETRGF…SNDLPLNVSR (339 aa)) are a; substrate-binding. Residues 340–555 (EILQDNKITA…NDQMTTQMAK (216 aa)) form a b region. The c stretch occupies residues 556-626 (LFAAAGQPVP…FIKRINKLLG (71 aa)).

The protein belongs to the heat shock protein 90 family. In terms of assembly, homodimer.

It localises to the cytoplasm. Its function is as follows. Molecular chaperone. Has ATPase activity. The polypeptide is Chaperone protein HtpG (Haemophilus influenzae (strain PittGG)).